The sequence spans 211 residues: Endonuclease Htp3 (211 aa).

Positions 1–20 (MLEVPVWIPILAFAVGLGLG) are cleaved as a signal peptide. The RxLR motif lies at 48 to 51 (RTLR). Residues 48–198 (RTLRGKVVSV…REKRVNIWSL (151 aa)) enclose the TNase-like domain. Residue aspartate 77 participates in Ca(2+) binding. Residue arginine 90 is part of the active site. Aspartate 95 contributes to the Ca(2+) binding site. Catalysis depends on residues glutamate 98 and arginine 138. N-linked (GlcNAc...) asparagine glycosylation is present at asparagine 153. Residues 200 to 211 (KRETPAQYKARK) are binding to the host cell surface.

This sequence in the N-terminal section; belongs to the RxLR effector family. It in the C-terminal section; belongs to the LCL3 family. In terms of assembly, interacts with the host cell surface endoplasmin gp96, in order to get translocated into to host cell. Interacts with the effector Htp1, in order to get released from vesicles into the host cytosol.

It localises to the secreted. Its subcellular location is the host cytoplasm. It is found in the host cytosol. With respect to regulation, the nuclease activity shows a general salt dependency with a clear reduction by magnesium and sulfate ions. Its function is as follows. Effector involved in the disease saprolegniosis in salmonids and other freshwater fish, resulting in considerable economic losses in aquaculture. Within the host fish cells, Htp3 is released from vesicles into host cytosol where it degrades nucleic acids. This is Endonuclease Htp3 (HTP3) from Saprolegnia parasitica (strain CBS 223.65).